Consider the following 96-residue polypeptide: Large ribosomal subunit protein bL28 (96 aa).

This sequence belongs to the bacterial ribosomal protein bL28 family.

The protein is Large ribosomal subunit protein bL28 of Methylobacterium nodulans (strain LMG 21967 / CNCM I-2342 / ORS 2060).